We begin with the raw amino-acid sequence, 616 residues long: Proline--tRNA ligase (616 aa).

Belongs to the class-II aminoacyl-tRNA synthetase family. ProS type 1 subfamily. Homodimer.

It is found in the cytoplasm. It catalyses the reaction tRNA(Pro) + L-proline + ATP = L-prolyl-tRNA(Pro) + AMP + diphosphate. Catalyzes the attachment of proline to tRNA(Pro) in a two-step reaction: proline is first activated by ATP to form Pro-AMP and then transferred to the acceptor end of tRNA(Pro). As ProRS can inadvertently accommodate and process non-cognate amino acids such as alanine and cysteine, to avoid such errors it has two additional distinct editing activities against alanine. One activity is designated as 'pretransfer' editing and involves the tRNA(Pro)-independent hydrolysis of activated Ala-AMP. The other activity is designated 'posttransfer' editing and involves deacylation of mischarged Ala-tRNA(Pro). The misacylated Cys-tRNA(Pro) is not edited by ProRS. In Lactococcus lactis subsp. cremoris (strain SK11), this protein is Proline--tRNA ligase.